A 35-amino-acid polypeptide reads, in one-letter code: Photosystem II reaction center protein T (35 aa).

A helical transmembrane segment spans residues 3–23 (ALVYTFLLVSTLGIIFFAIFF).

This sequence belongs to the PsbT family. As to quaternary structure, PSII is composed of 1 copy each of membrane proteins PsbA, PsbB, PsbC, PsbD, PsbE, PsbF, PsbH, PsbI, PsbJ, PsbK, PsbL, PsbM, PsbT, PsbY, PsbZ, Psb30/Ycf12, at least 3 peripheral proteins of the oxygen-evolving complex and a large number of cofactors. It forms dimeric complexes.

The protein localises to the plastid. It localises to the chloroplast thylakoid membrane. Found at the monomer-monomer interface of the photosystem II (PS II) dimer, plays a role in assembly and dimerization of PSII. PSII is a light-driven water plastoquinone oxidoreductase, using light energy to abstract electrons from H(2)O, generating a proton gradient subsequently used for ATP formation. This Stewartia pseudocamellia (Japanese stewartia) protein is Photosystem II reaction center protein T.